A 149-amino-acid polypeptide reads, in one-letter code: UPF0178 protein Pmen_0294 (149 aa).

It belongs to the UPF0178 family.

The polypeptide is UPF0178 protein Pmen_0294 (Ectopseudomonas mendocina (strain ymp) (Pseudomonas mendocina)).